Here is a 310-residue protein sequence, read N- to C-terminus: Thioredoxin reductase (310 aa).

34–41 (NGMQPGGQ) is an FAD binding site. C135 and C138 are oxidised to a cystine. 281–290 (DVQDKIYRQA) serves as a coordination point for FAD.

It belongs to the class-II pyridine nucleotide-disulfide oxidoreductase family. In terms of assembly, homodimer. Requires FAD as cofactor.

It is found in the cytoplasm. It catalyses the reaction [thioredoxin]-dithiol + NADP(+) = [thioredoxin]-disulfide + NADPH + H(+). The sequence is that of Thioredoxin reductase (trxB) from Rickettsia conorii (strain ATCC VR-613 / Malish 7).